Here is a 137-residue protein sequence, read N- to C-terminus: Insulin-like peptide 2 (137 aa).

Positions 1-26 (MSKPLSFISMVAVILLASSTVKLAQG) are cleaved as a signal peptide. Cystine bridges form between Cys-29–Cys-119, Cys-41–Cys-132, and Cys-118–Cys-123. Residues 53 to 104 (AMPGADSDLDALNPLQFVQEFEEEDNSISEPLRSALFPGSYLGGVLNSLAEV) constitute a propeptide, connecting peptide.

It belongs to the insulin family. In terms of assembly, heterodimer of a B chain and an A chain linked by two disulfide bonds. In terms of tissue distribution, broadly expressed at a low level in the embryonic mesoderm, beginning at stage 12. Expressed at a high level in the embryonic anterior midgut, with expression diminishing at late stage 16. Expressed at a low level in larval imaginal disks. Expressed at a high level in larval salivary glands and in seven cells of each larval brain hemisphere that may correspond to neurosecretory cells.

The protein resides in the secreted. Functionally, possible ligand of InR/insulin-like receptor. Its function is as follows. Plays a role in regulating body size by increasing cell size and cell number of individual organs. Probably mediates its growth effects by acting as a ligand for the insulin receptor and transducing a signal via the Chico/PI3K/Akt(PKB) pathway. This chain is Insulin-like peptide 2, found in Drosophila melanogaster (Fruit fly).